A 388-amino-acid polypeptide reads, in one-letter code: Methylthioribose-1-phosphate isomerase (388 aa).

Asp-253 serves as the catalytic Proton donor.

It belongs to the eIF-2B alpha/beta/delta subunits family. MtnA subfamily.

The protein localises to the cytoplasm. The protein resides in the nucleus. It catalyses the reaction 5-(methylsulfanyl)-alpha-D-ribose 1-phosphate = 5-(methylsulfanyl)-D-ribulose 1-phosphate. It participates in amino-acid biosynthesis; L-methionine biosynthesis via salvage pathway; L-methionine from S-methyl-5-thio-alpha-D-ribose 1-phosphate: step 1/6. Functionally, catalyzes the interconversion of methylthioribose-1-phosphate (MTR-1-P) into methylthioribulose-1-phosphate (MTRu-1-P). The protein is Methylthioribose-1-phosphate isomerase of Fusarium vanettenii (strain ATCC MYA-4622 / CBS 123669 / FGSC 9596 / NRRL 45880 / 77-13-4) (Fusarium solani subsp. pisi).